Consider the following 37-residue polypeptide: Delta-amaurobitoxin-Pl1a (37 aa).

Cystine bridges form between cysteine 2–cysteine 18, cysteine 9–cysteine 23, cysteine 17–cysteine 33, and cysteine 25–cysteine 31. Residue serine 37 is modified to Serine amide.

This sequence belongs to the neurotoxin 07 (Beta/delta-agtx) family. 02 (aga-3) subfamily. In terms of tissue distribution, expressed by the venom gland.

The protein resides in the secreted. Its function is as follows. Binds at site 4 of sodium channels (Nav) and inhibits the fast inactivation of cockroach channels. This toxin is active only on insects. Has a potent activity against S.litura larvae. The protein is Delta-amaurobitoxin-Pl1a of Pireneitega luctuosa (Tangled nest spider).